Reading from the N-terminus, the 65-residue chain is Large ribosomal subunit protein bL35 (65 aa).

The span at 1 to 45 (MPKMKSHSGAKKRFKKTGNGKIKRKKANKGHLLTKKNAKRKRQLR) shows a compositional bias: basic residues. Positions 1-65 (MPKMKSHSGA…RDRIKRMLST (65 aa)) are disordered. Basic and acidic residues predominate over residues 48-57 (VVVDDKANRD).

The protein belongs to the bacterial ribosomal protein bL35 family.

This is Large ribosomal subunit protein bL35 from Salinibacter ruber (strain DSM 13855 / M31).